The primary structure comprises 555 residues: Dihydroxy-acid dehydratase (555 aa).

Mg(2+) is bound at residue Asp-78. Cys-119 lines the [2Fe-2S] cluster pocket. Mg(2+)-binding residues include Asp-120 and Lys-121. At Lys-121 the chain carries N6-carboxylysine. Cys-191 lines the [2Fe-2S] cluster pocket. Residue Glu-444 coordinates Mg(2+). Catalysis depends on Ser-470, which acts as the Proton acceptor.

It belongs to the IlvD/Edd family. As to quaternary structure, homodimer. It depends on [2Fe-2S] cluster as a cofactor. Mg(2+) serves as cofactor.

It carries out the reaction (2R)-2,3-dihydroxy-3-methylbutanoate = 3-methyl-2-oxobutanoate + H2O. It catalyses the reaction (2R,3R)-2,3-dihydroxy-3-methylpentanoate = (S)-3-methyl-2-oxopentanoate + H2O. It participates in amino-acid biosynthesis; L-isoleucine biosynthesis; L-isoleucine from 2-oxobutanoate: step 3/4. The protein operates within amino-acid biosynthesis; L-valine biosynthesis; L-valine from pyruvate: step 3/4. In terms of biological role, functions in the biosynthesis of branched-chain amino acids. Catalyzes the dehydration of (2R,3R)-2,3-dihydroxy-3-methylpentanoate (2,3-dihydroxy-3-methylvalerate) into 2-oxo-3-methylpentanoate (2-oxo-3-methylvalerate) and of (2R)-2,3-dihydroxy-3-methylbutanoate (2,3-dihydroxyisovalerate) into 2-oxo-3-methylbutanoate (2-oxoisovalerate), the penultimate precursor to L-isoleucine and L-valine, respectively. The protein is Dihydroxy-acid dehydratase of Maridesulfovibrio salexigens (strain ATCC 14822 / DSM 2638 / NCIMB 8403 / VKM B-1763) (Desulfovibrio salexigens).